The primary structure comprises 267 residues: Membrane-spanning 4-domains subfamily A member 10 (267 aa).

Residues methionine 1–lysine 56 are Cytoplasmic-facing. Residues leucine 57 to serine 77 traverse the membrane as a helical segment. Residues threonine 78 to histidine 83 are Extracellular-facing. The helical transmembrane segment at leucine 84–methionine 104 threads the bilayer. Over alanine 105 to lysine 118 the chain is Cytoplasmic. The helical transmembrane segment at valine 119–isoleucine 139 threads the bilayer. Residues alanine 140–glutamate 168 lie on the Extracellular side of the membrane. Residues leucine 169–alanine 189 traverse the membrane as a helical segment. Topologically, residues tyrosine 190 to lysine 267 are cytoplasmic.

It belongs to the MS4A family. As to expression, expressed in thymus, kidney, colon, brain and testis. Expressed also by various hematopoietic and lymphoblastoid cell lines.

The protein localises to the membrane. May be involved in signal transduction as a component of a multimeric receptor complex. The chain is Membrane-spanning 4-domains subfamily A member 10 (Ms4a10) from Mus musculus (Mouse).